The following is a 235-amino-acid chain: Probable endonuclease LCL3 (235 aa).

A helical membrane pass occupies residues 11–33 (ISLIHPKVLLLSAGVTTSLFLSY). The 159-residue stretch at 58-216 (TPLYGRVTRV…KWLRRGLWSL (159 aa)) folds into the TNase-like domain. The active site involves Arg-107. Asp-112 serves as a coordination point for Ca(2+). Catalysis depends on residues Glu-115 and Arg-155.

Belongs to the LCL3 family.

It is found in the mitochondrion. It localises to the membrane. The sequence is that of Probable endonuclease LCL3 (LCL3) from Debaryomyces hansenii (strain ATCC 36239 / CBS 767 / BCRC 21394 / JCM 1990 / NBRC 0083 / IGC 2968) (Yeast).